A 313-amino-acid polypeptide reads, in one-letter code: Fe-S cluster assembly protein DRE2 (313 aa).

The segment at 1–184 (MTLRILLLLH…KKLLDRSNEV (184 aa)) is N-terminal SAM-like domain. The segment covering 134–144 (NITSNSNNNDS) has biased composition (low complexity). Disordered stretches follow at residues 134 to 155 (NITS…NNTG), 187 to 254 (NLAS…QEDN), and 271 to 313 (NLII…RQSG). The segment at 185 to 270 (KGNLASGTVK…NDLISELKSD (86 aa)) is linker. The span at 189-207 (ASGTVKSPSPGLTDTSAQN) shows a compositional bias: polar residues. Over residues 233–254 (SDSDNNEGRDLDDDDDDGQEDN) the composition is skewed to acidic residues.

This sequence belongs to the anamorsin family. In terms of assembly, monomer. Interacts with TAH18. Interacts with MIA40.

Its subcellular location is the cytoplasm. It is found in the mitochondrion intermembrane space. Its function is as follows. Component of the cytosolic iron-sulfur (Fe-S) protein assembly (CIA) machinery required for the maturation of extramitochondrial Fe-S proteins. Part of an electron transfer chain functioning in an early step of cytosolic Fe-S biogenesis, facilitating the de novo assembly of a [4Fe-4S] cluster on the scaffold complex CFD1-NBP35. Electrons are transferred to DRE2 from NADPH via the FAD- and FMN-containing protein TAH18. TAH18-DRE2 are also required for the assembly of the diferric tyrosyl radical cofactor of ribonucleotide reductase (RNR), probably by providing electrons for reduction during radical cofactor maturation in the catalytic small subunit RNR2. This is Fe-S cluster assembly protein DRE2 (DRE2) from Lodderomyces elongisporus (strain ATCC 11503 / CBS 2605 / JCM 1781 / NBRC 1676 / NRRL YB-4239) (Yeast).